The sequence spans 64 residues: UPF0337 protein SH2043 (64 aa).

The disordered stretch occupies residues 1-64 (MAEDKFEQAK…DKVKGNNDNK (64 aa)). The segment covering 22–64 (DNKDLEKEGQNDKASGKAKEAVENVKNKANDLIDKVKGNNDNK) has biased composition (basic and acidic residues).

The protein belongs to the UPF0337 (CsbD) family.

The sequence is that of UPF0337 protein SH2043 from Staphylococcus haemolyticus (strain JCSC1435).